A 316-amino-acid polypeptide reads, in one-letter code: Arginine transport system permease protein ArgU (316 aa).

Positions 1–14 (MSDLNQGPGASTAQ) are enriched in polar residues. The interval 1–20 (MSDLNQGPGASTAQPKPIEA) is disordered. A run of 6 helical transmembrane segments spans residues 29–49 (WVAAAIIVALLAWFIISALNN), 74–94 (IALTLLSMILGVVLGAILAVM), 108–128 (LYLWIFRGTPIYVQLVFWGLL), 151–171 (MFLLAVIGLGLNEAAYMAEIV), 217–237 (LISMLKTTSLVVAIPYSLELY), and 251–271 (VPMLLVAASWYLVITSILMVG). The ABC transmembrane type-1 domain occupies 70–274 (ALHTIALTLL…TSILMVGQYY (205 aa)).

This sequence belongs to the binding-protein-dependent transport system permease family. The complex is probably composed of two ATP-binding proteins (ArgV), two transmembrane proteins (ArgU) and a solute-binding protein (ArgT).

It is found in the cell membrane. Its function is as follows. Part of the ABC transporter complex ArgTUV involved in L-arginine import. May also transport L-citrulline. Probably responsible for the translocation of the substrate across the membrane. The polypeptide is Arginine transport system permease protein ArgU (Corynebacterium glutamicum (strain ATCC 13032 / DSM 20300 / JCM 1318 / BCRC 11384 / CCUG 27702 / LMG 3730 / NBRC 12168 / NCIMB 10025 / NRRL B-2784 / 534)).